A 67-amino-acid polypeptide reads, in one-letter code: Cell division protein ZapB (67 aa).

Residues 3 to 59 (LELLSQLETKIQTALETIELLKLELDEEKEKAANLAEQNHQLKQELSSWNDKITGLV) adopt a coiled-coil conformation.

It belongs to the ZapB family. As to quaternary structure, homodimer. The ends of the coiled-coil dimer bind to each other, forming polymers. Interacts with FtsZ.

It localises to the cytoplasm. In terms of biological role, non-essential, abundant cell division factor that is required for proper Z-ring formation. It is recruited early to the divisome by direct interaction with FtsZ, stimulating Z-ring assembly and thereby promoting cell division earlier in the cell cycle. Its recruitment to the Z-ring requires functional FtsA or ZipA. The polypeptide is Cell division protein ZapB (Shewanella amazonensis (strain ATCC BAA-1098 / SB2B)).